A 235-amino-acid chain; its full sequence is MRYLKFFLLLVFLVPSFGFSMHIMEGFLPPTHALIWYILSLPFFVIGLFTIRKTIKEKPNLKMLLAFVGAFTFVLSAMKIPSVTGSCSHPTGIGLGAIIFGPFTMTVIGTIVLLFQALLLAHGGLTTLGANTFSMAIVGSLVSYFIYKSLYKKNRNIAVFLAAFLGDLFTYVTTSFQLAVAFPDKTHGFIFSLAKFLSIFAITQVPLAIIEGLVTVVVIDLIYKYNKNELFEEGL.

Positions 1–33 (MRYLKFFLLLVFLVPSFGFSMHIMEGFLPPTHA) are cleaved as a signal peptide. The next 6 helical transmembrane spans lie at 34 to 51 (LIWYILSLPFFVIGLFTI), 63 to 83 (MLLAFVGAFTFVLSAMKIPSV), 95 to 115 (LGAIIFGPFTMTVIGTIVLLF), 118 to 138 (LLLAHGGLTTLGANTFSMAIV), 156 to 176 (NIAVFLAAFLGDLFTYVTTSF), and 199 to 219 (IFAITQVPLAIIEGLVTVVVI).

This sequence belongs to the CbiM family. As to quaternary structure, forms an energy-coupling factor (ECF) transporter complex composed of an ATP-binding protein (A component, CbiO), a transmembrane protein (T component, CbiQ) and 2 possible substrate-capture proteins (S components, CbiM and CbiN) of unknown stoichimetry.

It localises to the cell inner membrane. Its pathway is cofactor biosynthesis; adenosylcobalamin biosynthesis. Its function is as follows. Part of the energy-coupling factor (ECF) transporter complex CbiMNOQ involved in cobalt import. This chain is Cobalt transport protein CbiM, found in Thermosipho melanesiensis (strain DSM 12029 / CIP 104789 / BI429).